Reading from the N-terminus, the 244-residue chain is DNA repair protein RecO (244 aa).

This sequence belongs to the RecO family.

Functionally, involved in DNA repair and RecF pathway recombination. The chain is DNA repair protein RecO from Polynucleobacter asymbioticus (strain DSM 18221 / CIP 109841 / QLW-P1DMWA-1) (Polynucleobacter necessarius subsp. asymbioticus).